The primary structure comprises 188 residues: MVKIAIFASGSGSNFENIVEHVESGKLENIEVTALYTDHQNAFCIDRAKKHDIPVYINEPKQFDSKAAYEQHLVTLLNEDKVEWIILAGYMRLIGPDLLASFEGKILNIHPSLLPKYKGIDAIGQAYHSGDTITGSTVHYVDSGMDTGEIIEQRKCDIRPDDSKEQLEEKVKKLEYELYPSVIAKIVK.

Residue 12-14 (GSN) coordinates N(1)-(5-phospho-beta-D-ribosyl)glycinamide. (6R)-10-formyltetrahydrofolate-binding positions include K66, 91 to 94 (MRLI), and N108. H110 functions as the Proton donor in the catalytic mechanism.

The protein belongs to the GART family.

It carries out the reaction N(1)-(5-phospho-beta-D-ribosyl)glycinamide + (6R)-10-formyltetrahydrofolate = N(2)-formyl-N(1)-(5-phospho-beta-D-ribosyl)glycinamide + (6S)-5,6,7,8-tetrahydrofolate + H(+). It functions in the pathway purine metabolism; IMP biosynthesis via de novo pathway; N(2)-formyl-N(1)-(5-phospho-D-ribosyl)glycinamide from N(1)-(5-phospho-D-ribosyl)glycinamide (10-formyl THF route): step 1/1. Catalyzes the transfer of a formyl group from 10-formyltetrahydrofolate to 5-phospho-ribosyl-glycinamide (GAR), producing 5-phospho-ribosyl-N-formylglycinamide (FGAR) and tetrahydrofolate. In Staphylococcus aureus (strain COL), this protein is Phosphoribosylglycinamide formyltransferase.